Here is an 88-residue protein sequence, read N- to C-terminus: Large ribosomal subunit protein bL31B (88 aa).

This sequence belongs to the bacterial ribosomal protein bL31 family. Type B subfamily. As to quaternary structure, part of the 50S ribosomal subunit.

This Leuconostoc citreum (strain KM20) protein is Large ribosomal subunit protein bL31B.